The sequence spans 440 residues: Protein root UVB sensitive 3 (440 aa).

Helical transmembrane passes span 109–129 (IGAT…GILF), 154–174 (IGML…VVVC), and 232–252 (FTSG…VFHM).

This sequence belongs to the RUS1 family.

The protein resides in the membrane. This chain is Protein root UVB sensitive 3, found in Arabidopsis thaliana (Mouse-ear cress).